A 347-amino-acid polypeptide reads, in one-letter code: Phosphoribosylformylglycinamidine cyclo-ligase (347 aa).

This sequence belongs to the AIR synthase family.

The protein resides in the cytoplasm. The enzyme catalyses 2-formamido-N(1)-(5-O-phospho-beta-D-ribosyl)acetamidine + ATP = 5-amino-1-(5-phospho-beta-D-ribosyl)imidazole + ADP + phosphate + H(+). It functions in the pathway purine metabolism; IMP biosynthesis via de novo pathway; 5-amino-1-(5-phospho-D-ribosyl)imidazole from N(2)-formyl-N(1)-(5-phospho-D-ribosyl)glycinamide: step 2/2. The chain is Phosphoribosylformylglycinamidine cyclo-ligase from Alkalilimnicola ehrlichii (strain ATCC BAA-1101 / DSM 17681 / MLHE-1).